The following is a 923-amino-acid chain: Smoothelin (923 aa).

Ala2 carries the N-acetylalanine modification. Residues 24 to 89 (LAERRRIRSA…ARLAGRLESM (66 aa)) are a coiled coil. A disordered region spans residues 134–456 (SRLPSSGPRE…GTGEPGGSMK (323 aa)). Composition is skewed to low complexity over residues 164–179 (QEQQ…TPED) and 192–205 (RAPP…PASP). A compositionally biased stretch (pro residues) spans 237-252 (LPHPSEAPSPEPPMSP). Polar residues-rich tracts occupy residues 272–285 (PSDT…FSNT) and 293–314 (TKSC…NREP). Phosphoserine occurs at positions 299, 301, 304, and 340. Residues Thr359 and Thr372 each carry the phosphothreonine modification. Over residues 366–389 (PSLISTTPASSSSSNSSSPSPSDT) the composition is skewed to low complexity. 3 positions are modified to phosphoserine: Ser501, Ser521, and Ser574. 2 disordered regions span residues 542 to 578 (KMEP…PLSA) and 615 to 772 (QRKR…ARKA). The stretch at 601–628 (EERKLIRAALRELRQRKRDQRDKERERR) forms a coiled coil. Residues 615 to 638 (QRKRDQRDKERERRLREARARPGE) show a composition bias toward basic and acidic residues. Ser641 is subject to Phosphoserine. A compositionally biased stretch (polar residues) spans 674 to 687 (NDGTQTARTTTVES). The span at 697 to 721 (SSSSSTTTTTVQTKSFSSSSSSSSS) shows a compositional bias: low complexity. Position 735 is a phosphoserine (Ser735). Over residues 744–756 (LERRQAEKKKELM) the composition is skewed to basic and acidic residues. Phosphoserine is present on Ser798. One can recognise a Calponin-homology (CH) domain in the interval 805–912 (NSIKQMLLDW…YVQSLYNHLR (108 aa)).

The protein belongs to the smoothelin family.

It localises to the cytoplasm. The protein localises to the cytoskeleton. Its function is as follows. Structural protein of the cytoskeleton. The protein is Smoothelin (Smtn) of Mus musculus (Mouse).